A 221-amino-acid chain; its full sequence is Serotriflin (221 aa).

The 129-residue stretch at 19–147 folds into the SCP domain; sequence LDKHNALRRS…SYNYYYVCHY (129 aa). N-linked (GlcNAc...) asparagine glycosylation occurs at Asn-48. 8 disulfides stabilise this stretch: Cys-56/Cys-134, Cys-73/Cys-148, Cys-129/Cys-145, Cys-167/Cys-174, Cys-170/Cys-179, Cys-183/Cys-216, Cys-192/Cys-210, and Cys-201/Cys-214. One can recognise a ShKT domain in the interval 183 to 216; that stretch reads CKHVDRYSNCNSLVQQISCQSNNMNTDCPASCFC.

In terms of assembly, forms a stable, non-covalent complex with SSP-2.

Its subcellular location is the secreted. The protein is Serotriflin of Protobothrops flavoviridis (Habu).